The chain runs to 432 residues: E3 ubiquitin-protein ligase ATL42 (432 aa).

An N-terminal signal peptide occupies residues 1-18 (MYQIFFFFLPLLHSYASA). Residues 37–57 (LAVVTGVLAIMFALTFVLLVY) traverse the membrane as a helical segment. The RING-type; atypical zinc-finger motif lies at 123–165 (CSVCLSKFESVEILRLLPKCRHAFHIGCIDQWLEQHATCPLCR).

This sequence belongs to the RING-type zinc finger family. ATL subfamily.

It localises to the membrane. The enzyme catalyses S-ubiquitinyl-[E2 ubiquitin-conjugating enzyme]-L-cysteine + [acceptor protein]-L-lysine = [E2 ubiquitin-conjugating enzyme]-L-cysteine + N(6)-ubiquitinyl-[acceptor protein]-L-lysine.. It participates in protein modification; protein ubiquitination. In terms of biological role, E3 ubiquitin-protein ligase able to catalyze polyubiquitination with ubiquitin-conjugating enzyme E2 UBC8 in vitro. In Arabidopsis thaliana (Mouse-ear cress), this protein is E3 ubiquitin-protein ligase ATL42 (ATL42).